Consider the following 237-residue polypeptide: tRNA (guanine-N(7)-)-methyltransferase (237 aa).

S-adenosyl-L-methionine contacts are provided by Asp-35, Glu-60, Asn-87, and Asp-113. Residue Asp-113 is part of the active site. Substrate-binding residues include Lys-117 and Asp-149.

It belongs to the class I-like SAM-binding methyltransferase superfamily. TrmB family.

It carries out the reaction guanosine(46) in tRNA + S-adenosyl-L-methionine = N(7)-methylguanosine(46) in tRNA + S-adenosyl-L-homocysteine. The protein operates within tRNA modification; N(7)-methylguanine-tRNA biosynthesis. In terms of biological role, catalyzes the formation of N(7)-methylguanine at position 46 (m7G46) in tRNA. The chain is tRNA (guanine-N(7)-)-methyltransferase from Synechococcus sp. (strain CC9311).